A 369-amino-acid polypeptide reads, in one-letter code: Geranylgeranyl pyrophosphate synthase, chloroplastic (369 aa).

K118, R121, and H150 together coordinate isopentenyl diphosphate. Mg(2+) contacts are provided by D157 and D163. A dimethylallyl diphosphate-binding site is contributed by R168. R169 is a binding site for isopentenyl diphosphate. Dimethylallyl diphosphate-binding residues include K254, T255, Q292, K309, and K319.

This sequence belongs to the FPP/GGPP synthase family. In terms of assembly, monomer. Mg(2+) serves as cofactor.

It localises to the plastid. Its subcellular location is the chloroplast. The catalysed reaction is isopentenyl diphosphate + dimethylallyl diphosphate = (2E)-geranyl diphosphate + diphosphate. The enzyme catalyses isopentenyl diphosphate + (2E)-geranyl diphosphate = (2E,6E)-farnesyl diphosphate + diphosphate. It carries out the reaction isopentenyl diphosphate + (2E,6E)-farnesyl diphosphate = (2E,6E,10E)-geranylgeranyl diphosphate + diphosphate. Its pathway is isoprenoid biosynthesis; farnesyl diphosphate biosynthesis; farnesyl diphosphate from geranyl diphosphate and isopentenyl diphosphate: step 1/1. The protein operates within isoprenoid biosynthesis; geranyl diphosphate biosynthesis; geranyl diphosphate from dimethylallyl diphosphate and isopentenyl diphosphate: step 1/1. It functions in the pathway isoprenoid biosynthesis; geranylgeranyl diphosphate biosynthesis; geranylgeranyl diphosphate from farnesyl diphosphate and isopentenyl diphosphate: step 1/1. In terms of biological role, catalyzes the trans-addition of the three molecules of IPP onto DMAPP to form geranylgeranyl pyrophosphate. In Capsicum annuum (Capsicum pepper), this protein is Geranylgeranyl pyrophosphate synthase, chloroplastic.